We begin with the raw amino-acid sequence, 234 residues long: Large ribosomal subunit protein uL1 (234 aa).

Belongs to the universal ribosomal protein uL1 family. In terms of assembly, part of the 50S ribosomal subunit.

In terms of biological role, binds directly to 23S rRNA. The L1 stalk is quite mobile in the ribosome, and is involved in E site tRNA release. Functionally, protein L1 is also a translational repressor protein, it controls the translation of the L11 operon by binding to its mRNA. The chain is Large ribosomal subunit protein uL1 from Yersinia enterocolitica serotype O:8 / biotype 1B (strain NCTC 13174 / 8081).